The chain runs to 314 residues: DNA-directed RNA polymerase subunit alpha (314 aa).

An alpha N-terminal domain (alpha-NTD) region spans residues 1 to 227; that stretch reads MTYFQIECVE…SLFYPLTNLN (227 aa). The tract at residues 239–314 is alpha C-terminal domain (alpha-CTD); it reads EEEINQVLIE…LPKEKNIQNT (76 aa).

Belongs to the RNA polymerase alpha chain family. In plastids the minimal PEP RNA polymerase catalytic core is composed of four subunits: alpha, beta, beta', and beta''. When a (nuclear-encoded) sigma factor is associated with the core the holoenzyme is formed, which can initiate transcription.

It localises to the plastid. The protein localises to the chloroplast. It catalyses the reaction RNA(n) + a ribonucleoside 5'-triphosphate = RNA(n+1) + diphosphate. Its function is as follows. DNA-dependent RNA polymerase catalyzes the transcription of DNA into RNA using the four ribonucleoside triphosphates as substrates. This chain is DNA-directed RNA polymerase subunit alpha, found in Gracilaria tenuistipitata var. liui (Red alga).